A 795-amino-acid chain; its full sequence is Myosin light chain kinase 3 (795 aa).

At serine 155 the chain carries Phosphoserine. 2 disordered regions span residues 236-257 (GPGQVPLPTEAESRLPETASEN) and 305-328 (SSGPLPQPLGPLTPDSDIHSGDAL). Residues serine 351 and serine 432 each carry the phosphoserine modification. Positions 367 to 452 (DQIPKGARPF…GPGRTEAGRL (86 aa)) are disordered. The Protein kinase domain maps to 491-746 (VSQHEVLGGG…ATQCLKHEWL (256 aa)). ATP-binding positions include 497–505 (LGGGRFGQV) and lysine 520. Aspartate 612 serves as the catalytic Proton acceptor.

Belongs to the protein kinase superfamily. CAMK Ser/Thr protein kinase family. It depends on Mg(2+) as a cofactor. Phosphorylated on serine residues. Restricted to cardiomyocytes (at protein level). Down-regulated in heart after experimental myocardial infarction at the protein level; no significant changes at the mRNA level.

It localises to the cytoplasm. It catalyses the reaction L-seryl-[myosin light chain] + ATP = O-phospho-L-seryl-[myosin light chain] + ADP + H(+). The enzyme catalyses L-threonyl-[myosin light chain] + ATP = O-phospho-L-threonyl-[myosin light chain] + ADP + H(+). In terms of biological role, kinase that phosphorylates MYL2 in vitro. Has been proposed to be calmodulin-dependent, although MYL2 phosphorylation has also been observed in the presence or absence of calmodulin. Promotes sarcomere formation in cardiomyocytes and increases cardiomyocyte contractility. This is Myosin light chain kinase 3 (Mylk3) from Mus musculus (Mouse).